The sequence spans 201 residues: Adenylyl-sulfate kinase (201 aa).

Position 35–42 (35–42 (GLSGSGKS)) interacts with ATP. Ser109 functions as the Phosphoserine intermediate in the catalytic mechanism.

This sequence belongs to the APS kinase family.

The catalysed reaction is adenosine 5'-phosphosulfate + ATP = 3'-phosphoadenylyl sulfate + ADP + H(+). Its pathway is sulfur metabolism; hydrogen sulfide biosynthesis; sulfite from sulfate: step 2/3. In terms of biological role, catalyzes the synthesis of activated sulfate. The polypeptide is Adenylyl-sulfate kinase (Escherichia coli (strain ATCC 8739 / DSM 1576 / NBRC 3972 / NCIMB 8545 / WDCM 00012 / Crooks)).